An 840-amino-acid polypeptide reads, in one-letter code: Wings apart-like protein 2 (840 aa).

3 disordered regions span residues Met1–Asp37, Ser56–Asn78, and Phe532–Val594. Residues Lys546–Gly557 are compositionally biased toward basic residues. Residues Ser558 to Ser567 show a composition bias toward basic and acidic residues. Over residues Gln569–Glu585 the composition is skewed to polar residues. A WAPL domain is found at Lys764 to Leu819.

This sequence belongs to the WAPL family. As to quaternary structure, interacts with the cohesin complex throughout the cell cycle. Expressed in roots, leaves, buds and siliques.

It is found in the nucleus. The protein resides in the chromosome. Functionally, regulator of sister chromatid cohesion in meiosis which negatively regulates cohesin association with chromatin, acting as an antagonist of CTF7. Cohesion ensures that chromosome partitioning is accurate in both meiotic and mitotic cells and plays an important role in DNA repair. Essential for the prophase removal of cohesin during meiosis thus determining the timely release of meiotic cohesion. Important for proper spindle attachment and assembly during meiosis. Helps to prevent abnormal centromere association during prophase I in meiocytes. Required for early embryonic patterning. Also involved in chromosome segregation during mitosis. This Arabidopsis thaliana (Mouse-ear cress) protein is Wings apart-like protein 2.